The sequence spans 324 residues: RING-H2 finger protein ATL3 (324 aa).

Residues 24–44 (IILTAIIVLFMAVLFVLILHL) form a helical membrane-spanning segment. The segment at 127–169 (CSICLSELVKGDKARLLPKCNHSFHVECIDMWFQSHSTCPICR) adopts an RING-type; atypical zinc-finger fold. Disordered regions lie at residues 179-210 (SSKRVEQVPDNAENAGTTNNNHDALSQLSTSS), 226-248 (VSTGNTNVGTQEDGAAGNGASQS), and 299-324 (RDKRVGCSNSSTSNSSSSNAVASVDP). 2 stretches are compositionally biased toward polar residues: residues 192 to 210 (NAGTTNNNHDALSQLSTSS) and 226 to 235 (VSTGNTNVGT). The span at 306–324 (SNSSTSNSSSSNAVASVDP) shows a compositional bias: low complexity.

This sequence belongs to the RING-type zinc finger family. ATL subfamily.

The protein resides in the membrane. It catalyses the reaction S-ubiquitinyl-[E2 ubiquitin-conjugating enzyme]-L-cysteine + [acceptor protein]-L-lysine = [E2 ubiquitin-conjugating enzyme]-L-cysteine + N(6)-ubiquitinyl-[acceptor protein]-L-lysine.. It participates in protein modification; protein ubiquitination. In Arabidopsis thaliana (Mouse-ear cress), this protein is RING-H2 finger protein ATL3 (ATL3).